Consider the following 72-residue polypeptide: uncharacterized protein (72 aa).

This is an uncharacterized protein from Bacillus subtilis (strain 168).